Reading from the N-terminus, the 499-residue chain is MRINPTTSGSEVSAVEKKNLGRIVKIIGPVLDVAFPPGKMPNIYNALVVQGRDNEQTNVTCEVQQLLGNNRVRAVAMSDTDGLMRGMEVIDTGAPISVPVGGSTLGRIFNVLGQPVDNLGPVDTNTTSPIHRSAPAFIQLDTKLSIFETGIKVVDLLAPYRRGGKIGLFGGAGVGKTVLIMELINNIAKAHGGVSVFGGVGERTREGNDLYLEMKESGVINEENIPESKVALVYGQMNEPPGARMRVGLTALTMAEYFRDVNEQDVLLFIDNIFRFVQAGSEVSALLGRMPSAVGYQPTLSTEMGSLQERITSTKEGSITSIQAVYVPADDLTDPAPATTFAHLDATTVLSRGLAAKGIYPAVDPLDSTSTMLQPRIVGEEHYETAQRVKQTLQRYKELQDIIAILGLDELSEEDRLTVARARKIERFLSQPFFVAEVFTGSPGKYVGLAETIRGFQSILSGELDGLPEQAFYLVGNIDEATAKAMNLKNLEMESDLKK.

170–177 (GGAGVGKT) is an ATP binding site.

This sequence belongs to the ATPase alpha/beta chains family. In terms of assembly, F-type ATPases have 2 components, CF(1) - the catalytic core - and CF(0) - the membrane proton channel. CF(1) has five subunits: alpha(3), beta(3), gamma(1), delta(1), epsilon(1). CF(0) has four main subunits: a(1), b(1), b'(1) and c(9-12).

It localises to the plastid. Its subcellular location is the chloroplast thylakoid membrane. It carries out the reaction ATP + H2O + 4 H(+)(in) = ADP + phosphate + 5 H(+)(out). Its function is as follows. Produces ATP from ADP in the presence of a proton gradient across the membrane. The catalytic sites are hosted primarily by the beta subunits. This is ATP synthase subunit beta, chloroplastic from Ipomoea purpurea (Common morning glory).